A 774-amino-acid polypeptide reads, in one-letter code: E3 ubiquitin-protein ligase RFWD3 (774 aa).

Serine 46 and serine 63 each carry phosphoserine; by ATM and ATR. Disordered stretches follow at residues asparagine 95–serine 116, proline 139–glycine 225, and glycine 257–aspartate 280. Residues serine 106–serine 116 are compositionally biased toward polar residues. Basic residues predominate over residues arginine 150–arginine 162. Residues serine 211–serine 221 are compositionally biased toward low complexity. The segment at cysteine 287–asparagine 331 adopts an RING-type; degenerate zinc-finger fold. A coiled-coil region spans residues serine 361–glutamine 413. 3 WD repeats span residues methionine 495–asparagine 537, glycine 539–glutamine 577, and lysine 583–proline 628.

As to quaternary structure, interacts with MDM2 and p53/TP53. Binds to the RPA complex via direct interaction with RPA2. Interacts with RAD51. In terms of processing, phosphorylated at Ser-46 and Ser-63 upon DNA damage by ATM or ATR. ATM phosphorylation occurs at early times upon DNA damage, while ATR is the major kinase at later times. Phosphorylation by ATM and ATR is required to stabilize p53/TP53. Part of the phosphorylation depends upon RPA2 presence.

It is found in the nucleus. The protein resides in the PML body. Its subcellular location is the cytoplasm. It catalyses the reaction S-ubiquitinyl-[E2 ubiquitin-conjugating enzyme]-L-cysteine + [acceptor protein]-L-lysine = [E2 ubiquitin-conjugating enzyme]-L-cysteine + N(6)-ubiquitinyl-[acceptor protein]-L-lysine.. It functions in the pathway protein modification; protein ubiquitination. Functionally, E3 ubiquitin-protein ligase required for the repair of DNA interstrand cross-links (ICL) in response to DNA damage. Plays a key role in RPA-mediated DNA damage signaling and repair. Acts by mediating ubiquitination of the RPA complex (RPA1, RPA2 and RPA3 subunits) and RAD51 at stalled replication forks, leading to remove them from DNA damage sites and promote homologous recombination. Also mediates the ubiquitination of p53/TP53 in the late response to DNA damage, and acts as a positive regulator of p53/TP53 stability, thereby regulating the G1/S DNA damage checkpoint. May act by catalyzing the formation of short polyubiquitin chains on p53/TP53 that are not targeted to the proteasome. In response to ionizing radiation, interacts with MDM2 and enhances p53/TP53 ubiquitination, possibly by restricting MDM2 from extending polyubiquitin chains on ubiquitinated p53/TP53. Required to translesion DNA synthesis across DNA-protein cross-link adducts by catalyzing ubiquitination of proteins on single-stranded DNA (ssDNA). In Homo sapiens (Human), this protein is E3 ubiquitin-protein ligase RFWD3.